Here is a 180-residue protein sequence, read N- to C-terminus: MNKKTNLIWIDLEMTGLIPEKDVIIEIATIVTNVQLHIIAQGPSLVIHQNDEILSNMDQWNTEHHTSSGLLRRVRESSLSCKQAEAQTLEFLKKYVHTGASPMCGNTICQDRRFLYNYMPTLERFFHYRHIDVSTLKELVIRWKPNAKMIFEKDSAHLALSDIQDSIDELKHYRNVFINV.

Residues Leu7–Leu170 form the Exonuclease domain. Tyr128 is an active-site residue.

The protein belongs to the oligoribonuclease family.

The protein resides in the cytoplasm. Its function is as follows. 3'-to-5' exoribonuclease specific for small oligoribonucleotides. This is Oligoribonuclease from Ruthia magnifica subsp. Calyptogena magnifica.